A 322-amino-acid polypeptide reads, in one-letter code: NADH-cytochrome b5 reductase 2 (322 aa).

The chain crosses the membrane as a helical span at residues 32 to 48 (LAPIYISVGLAGLGVGL). The 105-residue stretch at 72–176 (QGWVDLKLSE…KGPIPKYPWE (105 aa)) folds into the FAD-binding FR-type domain. 179–214 (KHKHICLIAGGTGITPMYQLARQIFKNPEDQTKVTL) lines the FAD pocket.

The protein belongs to the flavoprotein pyridine nucleotide cytochrome reductase family. Requires FAD as cofactor.

The protein resides in the mitochondrion outer membrane. It carries out the reaction 2 Fe(III)-[cytochrome b5] + NADH = 2 Fe(II)-[cytochrome b5] + NAD(+) + H(+). May mediate the reduction of outer membrane cytochrome b5. This is NADH-cytochrome b5 reductase 2 (mcr1) from Aspergillus clavatus (strain ATCC 1007 / CBS 513.65 / DSM 816 / NCTC 3887 / NRRL 1 / QM 1276 / 107).